The chain runs to 207 residues: Large ribosomal subunit protein uL4 (207 aa).

Positions 50–75 (KTKTVSEVSGTTKKPFKQKGTGNARQ) are disordered.

The protein belongs to the universal ribosomal protein uL4 family. As to quaternary structure, part of the 50S ribosomal subunit.

One of the primary rRNA binding proteins, this protein initially binds near the 5'-end of the 23S rRNA. It is important during the early stages of 50S assembly. It makes multiple contacts with different domains of the 23S rRNA in the assembled 50S subunit and ribosome. Its function is as follows. Forms part of the polypeptide exit tunnel. This chain is Large ribosomal subunit protein uL4, found in Rickettsia felis (strain ATCC VR-1525 / URRWXCal2) (Rickettsia azadi).